We begin with the raw amino-acid sequence, 193 residues long: Cilia- and flagella-associated protein 20 (193 aa).

It belongs to the CFAP20 family. Microtubule inner protein component of sperm flagellar doublet microtubules.

Its subcellular location is the nucleus. The protein localises to the cytoplasm. The protein resides in the cytoskeleton. It localises to the microtubule organizing center. It is found in the centrosome. Its subcellular location is the centriole. The protein localises to the cilium basal body. The protein resides in the cilium axoneme. It localises to the flagellum axoneme. Functionally, cilium- and flagellum-specific protein that plays a role in axonemal structure organization and motility. Microtubule inner protein (MIP) part of the dynein-decorated doublet microtubules (DMTs) in cilia axoneme, which is required for motile cilia beating. Involved in the regulation of the size and morphology of cilia. Required for axonemal microtubules polyglutamylation. The protein is Cilia- and flagella-associated protein 20 of Homo sapiens (Human).